The following is a 386-amino-acid chain: 5-amino-6-(D-ribitylamino)uracil--L-tyrosine 4-hydroxyphenyl transferase (386 aa).

In terms of domain architecture, Radical SAM core spans 56–303 (VSYVINRNLN…MAVARLYLGD (248 aa)). The [4Fe-4S] cluster site is built by C70, C74, and C77.

The protein belongs to the radical SAM superfamily. CofH family. As to quaternary structure, consists of two subunits, CofG and CofH. It depends on [4Fe-4S] cluster as a cofactor.

It carries out the reaction 5-amino-6-(D-ribitylamino)uracil + L-tyrosine + S-adenosyl-L-methionine = 5-amino-5-(4-hydroxybenzyl)-6-(D-ribitylimino)-5,6-dihydrouracil + 2-iminoacetate + 5'-deoxyadenosine + L-methionine + H(+). Its pathway is cofactor biosynthesis; coenzyme F0 biosynthesis. In terms of biological role, catalyzes the radical-mediated synthesis of 5-amino-5-(4-hydroxybenzyl)-6-(D-ribitylimino)-5,6-dihydrouracil from 5-amino-6-(D-ribitylamino)uracil and L-tyrosine. The chain is 5-amino-6-(D-ribitylamino)uracil--L-tyrosine 4-hydroxyphenyl transferase from Synechococcus elongatus (strain ATCC 33912 / PCC 7942 / FACHB-805) (Anacystis nidulans R2).